Here is a 370-residue protein sequence, read N- to C-terminus: GTPase Obg (370 aa).

The region spanning 1 to 159 (MKFIDEARIE…RMVRLELKVL (159 aa)) is the Obg domain. The disordered stretch occupies residues 127–147 (NLHFKSSTNRAPRQKTDGKPG). An OBG-type G domain is found at 160–334 (ADVGLLGMPN…LCYAVYDYLA (175 aa)). GTP-binding positions include 166–173 (GMPNAGKS), 191–195 (FTTLA), 213–216 (DIPG), 284–287 (NKLD), and 315–317 (SAL). S173 and T193 together coordinate Mg(2+).

Belongs to the TRAFAC class OBG-HflX-like GTPase superfamily. OBG GTPase family. As to quaternary structure, monomer. Requires Mg(2+) as cofactor.

It localises to the cytoplasm. Functionally, an essential GTPase which binds GTP, GDP and possibly (p)ppGpp with moderate affinity, with high nucleotide exchange rates and a fairly low GTP hydrolysis rate. Plays a role in control of the cell cycle, stress response, ribosome biogenesis and in those bacteria that undergo differentiation, in morphogenesis control. This chain is GTPase Obg, found in Paraburkholderia phymatum (strain DSM 17167 / CIP 108236 / LMG 21445 / STM815) (Burkholderia phymatum).